A 158-amino-acid chain; its full sequence is SsrA-binding protein (158 aa).

It belongs to the SmpB family.

The protein resides in the cytoplasm. Functionally, required for rescue of stalled ribosomes mediated by trans-translation. Binds to transfer-messenger RNA (tmRNA), required for stable association of tmRNA with ribosomes. tmRNA and SmpB together mimic tRNA shape, replacing the anticodon stem-loop with SmpB. tmRNA is encoded by the ssrA gene; the 2 termini fold to resemble tRNA(Ala) and it encodes a 'tag peptide', a short internal open reading frame. During trans-translation Ala-aminoacylated tmRNA acts like a tRNA, entering the A-site of stalled ribosomes, displacing the stalled mRNA. The ribosome then switches to translate the ORF on the tmRNA; the nascent peptide is terminated with the 'tag peptide' encoded by the tmRNA and targeted for degradation. The ribosome is freed to recommence translation, which seems to be the essential function of trans-translation. The chain is SsrA-binding protein from Hydrogenovibrio crunogenus (strain DSM 25203 / XCL-2) (Thiomicrospira crunogena).